The primary structure comprises 312 residues: Urease accessory protein 7 (312 aa).

Positions 28–86 (QEATGTDSHHAHHHHTPSGASSAISHTHDNMPHDHGQFHDHGPGLWTPEEHGHTHEHLE) are disordered. The histine rich nickel-binding domain stretch occupies residues 36 to 87 (HHAHHHHTPSGASSAISHTHDNMPHDHGQFHDHGPGLWTPEEHGHTHEHLEH). Residues 53–86 (HTHDNMPHDHGQFHDHGPGLWTPEEHGHTHEHLE) show a composition bias toward basic and acidic residues. A GTP binding P-loop motif is present at residues 115–122 (GPVGSGKT). Residues 147–154 (TREDQEFL) carry the Switch domain 1 motif. Positions 171–172 (GG) match the switch domain 2 motif.

The protein belongs to the SIMIBI class G3E GTPase family. UreG subfamily. In terms of assembly, URE4, URE6 and URE7 may form a complex that acts as a GTP-hydrolysis-dependent molecular chaperone, activating the urease apoprotein URE1.

Functionally, urease accessory protein that binds 2 nickel atoms likely via its conserved histidine-rich domain and supplies nickel for the functional urease URE1. Has probably a dual function as a nickel chaperone and GTPase. Plays a role in host brain invasion. The polypeptide is Urease accessory protein 7 (Cryptococcus neoformans var. grubii serotype A (strain H99 / ATCC 208821 / CBS 10515 / FGSC 9487) (Filobasidiella neoformans var. grubii)).